The primary structure comprises 519 residues: Dihydropyrimidinase (519 aa).

Zn(2+) is bound by residues histidine 67 and histidine 69. Serine 79 bears the Phosphoserine mark. Residue lysine 159 participates in Zn(2+) binding. Position 159 is an N6-carboxylysine (lysine 159). Tyrosine 164 provides a ligand contact to substrate. The Zn(2+) site is built by histidine 192 and histidine 248. Lysine 256 carries the post-translational modification N6-succinyllysine. Aspartate 326 contacts Zn(2+). Asparagine 347 contributes to the substrate binding site. The residue at position 510 (threonine 510) is a Phosphothreonine.

The protein belongs to the metallo-dependent hydrolases superfamily. Hydantoinase/dihydropyrimidinase family. Homotetramer. Zn(2+) serves as cofactor. In terms of processing, carboxylation allows a single lysine to coordinate two zinc ions.

The catalysed reaction is 5,6-dihydrouracil + H2O = 3-(carbamoylamino)propanoate + H(+). Its function is as follows. Catalyzes the second step of the reductive pyrimidine degradation, the reversible hydrolytic ring opening of dihydropyrimidines. Can catalyze the ring opening of 5,6-dihydrouracil to N-carbamyl-alanine and of 5,6-dihydrothymine to N-carbamyl-amino isobutyrate. This chain is Dihydropyrimidinase (Dpys), found in Rattus norvegicus (Rat).